The primary structure comprises 129 residues: Iron-sulfur cluster assembly 1 homolog, mitochondrial (129 aa).

The N-terminal 12 residues, 1–12, are a transit peptide targeting the mitochondrion; that stretch reads MASSVVRATVRA. Cysteine 57, cysteine 121, and cysteine 123 together coordinate Fe cation.

This sequence belongs to the HesB/IscA family.

It is found in the mitochondrion. In terms of biological role, involved in the maturation of mitochondrial 4Fe-4S proteins functioning late in the iron-sulfur cluster assembly pathway. Probably involved in the binding of an intermediate of Fe/S cluster assembly. The polypeptide is Iron-sulfur cluster assembly 1 homolog, mitochondrial (ISCA1) (Gallus gallus (Chicken)).